The sequence spans 279 residues: Prohibitin-4, mitochondrial (279 aa).

Gly-2 carries the post-translational modification N-acetylglycine. Topologically, residues Gly-2–Val-6 are mitochondrial matrix. A helical; Signal-anchor for type II membrane protein transmembrane segment spans residues Ala-7 to Leu-28. Residues Asn-29–Arg-279 are Mitochondrial intermembrane-facing.

This sequence belongs to the prohibitin family. Component of a prohibitin multimeric complex in mitochondrial membranes. As to expression, mostly expressed in proliferative tissues, including vasculature, shoot and root apical tissues. Accumulates in dry seeds.

The protein resides in the mitochondrion inner membrane. Its function is as follows. Prohibitin probably acts as a holdase/unfoldase for the stabilization of newly synthesized mitochondrial proteins. The sequence is that of Prohibitin-4, mitochondrial (PHB4) from Arabidopsis thaliana (Mouse-ear cress).